Consider the following 169-residue polypeptide: Large ribosomal subunit protein uL5 (169 aa).

The protein belongs to the universal ribosomal protein uL5 family. Part of the 50S ribosomal subunit; contacts the 5S rRNA and probably tRNA. Forms a bridge to the 30S subunit in the 70S ribosome.

Its function is as follows. This is one of the proteins that bind and probably mediate the attachment of the 5S RNA into the large ribosomal subunit, where it forms part of the central protuberance. In the 70S ribosome it contacts protein S13 of the 30S subunit (bridge B1b), connecting the 2 subunits; this bridge is implicated in subunit movement. May contact the P site tRNA; the 5S rRNA and some of its associated proteins might help stabilize positioning of ribosome-bound tRNAs. This Methanococcoides burtonii (strain DSM 6242 / NBRC 107633 / OCM 468 / ACE-M) protein is Large ribosomal subunit protein uL5.